The chain runs to 529 residues: HTH-type transcriptional activator Btr (529 aa).

Positions 182–201 (LAQLSQMAGISAKHYSESFK) form a DNA-binding region, H-T-H motif. The region spanning 268–528 (KIAAYGRGTM…QTVSLLSGDC (261 aa)) is the Fe/B12 periplasmic-binding domain.

As to quaternary structure, binds with high affinity to both apo-bacillibactin and iron-bacillibactin.

It is found in the cytoplasm. In terms of biological role, in iron-limited conditions, activates expression of the feuABCybbA operon, which encodes the bacillibactin uptake system. Acts by binding directly to a conserved direct repeat element upstream of the feuA promoter. Activity is increased in the presence of bacillibactin. The chain is HTH-type transcriptional activator Btr (btr) from Bacillus subtilis (strain 168).